The chain runs to 88 residues: MSKTFEELFAELAIKSQTRPAGSGTVEELDRGVHAIGKKIVEEASEVWMAAEHEGNERLAEEICQEIYHLQVMMIKQGLSLDDVYKHL.

Belongs to the PRA-PH family.

Its subcellular location is the cytoplasm. It catalyses the reaction 1-(5-phospho-beta-D-ribosyl)-ATP + H2O = 1-(5-phospho-beta-D-ribosyl)-5'-AMP + diphosphate + H(+). It functions in the pathway amino-acid biosynthesis; L-histidine biosynthesis; L-histidine from 5-phospho-alpha-D-ribose 1-diphosphate: step 2/9. This is Phosphoribosyl-ATP pyrophosphatase from Cutibacterium acnes (strain DSM 16379 / KPA171202) (Propionibacterium acnes).